A 262-amino-acid chain; its full sequence is 4-hydroxy-2-oxo-heptane-1,7-dioate aldolase (262 aa).

Residue His45 is the Proton acceptor of the active site. Residue Gln147 coordinates substrate. Residue Glu149 participates in a divalent metal cation binding. The substrate site is built by Ala174 and Asp175. An a divalent metal cation-binding site is contributed by Asp175.

It belongs to the HpcH/HpaI aldolase family. Homohexamer; trimer of dimers. The cofactor is a divalent metal cation.

The catalysed reaction is 4-hydroxy-2-oxoheptanedioate = succinate semialdehyde + pyruvate. It catalyses the reaction D-glyceraldehyde + 3-hydroxypyruvate = (3R,4S,5R)-3,4,5,6-tetrahydroxy-2-oxohexanoate. It carries out the reaction D-glyceraldehyde + 3-hydroxypyruvate = 2-dehydro-D-gluconate. The enzyme catalyses D-glyceraldehyde + 3-hydroxypyruvate = 2-dehydro-D-galactonate. The catalysed reaction is D-glyceraldehyde + pyruvate = 2-dehydro-3-deoxy-L-galactonate. It catalyses the reaction 2-dehydro-3-deoxy-D-gluconate = D-glyceraldehyde + pyruvate. It participates in aromatic compound metabolism; 4-hydroxyphenylacetate degradation; pyruvate and succinate semialdehyde from 4-hydroxyphenylacetate: step 7/7. Functionally, catalyzes the reversible retro-aldol cleavage of 4-hydroxy-2-ketoheptane-1,7-dioate (HKHD) to pyruvate and succinic semialdehyde. In vitro, can catalyze the aldolisation reaction between hydroxypyruvate (HPA) or pyruvate (PA) and D-glyceraldehyde (D-GA). The condensation of hydroxypyruvate and D-glyceraldehyde produces (3R,4S,5R)-3,4,5,6-tetrahydroxy-2-oxohexanoate as the major product, 2-dehydro-D-gluconate and 2-dehydro-D-galactonate. The condensation of pyruvate and D-glyceraldehyde produces 2-dehydro-3-deoxy-L-galactonate as the major product and 2-dehydro-3-deoxy-D-gluconate. This Escherichia coli (strain ATCC 8739 / DSM 1576 / NBRC 3972 / NCIMB 8545 / WDCM 00012 / Crooks) protein is 4-hydroxy-2-oxo-heptane-1,7-dioate aldolase.